A 366-amino-acid chain; its full sequence is Anhydro-N-acetylmuramic acid kinase (366 aa).

ATP is bound at residue 15–22; sequence GTSLDGVD.

Belongs to the anhydro-N-acetylmuramic acid kinase family.

The enzyme catalyses 1,6-anhydro-N-acetyl-beta-muramate + ATP + H2O = N-acetyl-D-muramate 6-phosphate + ADP + H(+). Its pathway is amino-sugar metabolism; 1,6-anhydro-N-acetylmuramate degradation. It participates in cell wall biogenesis; peptidoglycan recycling. In terms of biological role, catalyzes the specific phosphorylation of 1,6-anhydro-N-acetylmuramic acid (anhMurNAc) with the simultaneous cleavage of the 1,6-anhydro ring, generating MurNAc-6-P. Is required for the utilization of anhMurNAc either imported from the medium or derived from its own cell wall murein, and thus plays a role in cell wall recycling. In Hydrogenovibrio crunogenus (strain DSM 25203 / XCL-2) (Thiomicrospira crunogena), this protein is Anhydro-N-acetylmuramic acid kinase.